Reading from the N-terminus, the 483-residue chain is Cysteine--tRNA ligase (483 aa).

A Zn(2+)-binding site is contributed by cysteine 29. The 'HIGH' region signature appears at 31–41; sequence PTVYGHAHLGH. The Zn(2+) site is built by cysteine 221, histidine 246, and glutamate 250. A 'KMSKS' region motif is present at residues 278 to 282; sequence KMGKS. Lysine 281 provides a ligand contact to ATP.

Belongs to the class-I aminoacyl-tRNA synthetase family. Monomer. It depends on Zn(2+) as a cofactor.

The protein resides in the cytoplasm. It catalyses the reaction tRNA(Cys) + L-cysteine + ATP = L-cysteinyl-tRNA(Cys) + AMP + diphosphate. The polypeptide is Cysteine--tRNA ligase (Chlorobium luteolum (strain DSM 273 / BCRC 81028 / 2530) (Pelodictyon luteolum)).